A 359-amino-acid chain; its full sequence is MATH domain and coiled-coil domain-containing protein At2g42475 (359 aa).

The region spanning 6–128 is the MATH domain; it reads KTSFTFEIEN…NDKLIITVEV (123 aa). A coiled-coil region spans residues 146 to 337; the sequence is EFKELQDLYN…NLELMVLDFK (192 aa).

This is MATH domain and coiled-coil domain-containing protein At2g42475 from Arabidopsis thaliana (Mouse-ear cress).